The following is a 524-amino-acid chain: Bifunctional purine biosynthesis protein PurH (524 aa).

An MGS-like domain is found at 1–149; the sequence is MSDPLIKRAL…KNNESVTVLT (149 aa).

It belongs to the PurH family.

It catalyses the reaction (6R)-10-formyltetrahydrofolate + 5-amino-1-(5-phospho-beta-D-ribosyl)imidazole-4-carboxamide = 5-formamido-1-(5-phospho-D-ribosyl)imidazole-4-carboxamide + (6S)-5,6,7,8-tetrahydrofolate. The catalysed reaction is IMP + H2O = 5-formamido-1-(5-phospho-D-ribosyl)imidazole-4-carboxamide. The protein operates within purine metabolism; IMP biosynthesis via de novo pathway; 5-formamido-1-(5-phospho-D-ribosyl)imidazole-4-carboxamide from 5-amino-1-(5-phospho-D-ribosyl)imidazole-4-carboxamide (10-formyl THF route): step 1/1. Its pathway is purine metabolism; IMP biosynthesis via de novo pathway; IMP from 5-formamido-1-(5-phospho-D-ribosyl)imidazole-4-carboxamide: step 1/1. This is Bifunctional purine biosynthesis protein PurH from Chlorobium phaeovibrioides (strain DSM 265 / 1930) (Prosthecochloris vibrioformis (strain DSM 265)).